We begin with the raw amino-acid sequence, 124 residues long: UPF0102 protein Meso_4010 (124 aa).

The protein belongs to the UPF0102 family.

The protein is UPF0102 protein Meso_4010 of Chelativorans sp. (strain BNC1).